The sequence spans 632 residues: METDPANSSSKSPAVVSEKDVLIPEPSENTVGVVQDPVSAEREAHEDSISTEASVAKVDDTQMPASSTGSEPLSKTDDIVPCPPGSSPRESPPSIFSSSGLSSWAKSFKFQQQDPNRTDSGMSAFTRFTSELGLHLPTKGSEEVGDSRSSNTQVGGAFESLTKAVVDSSRGAVKAMQVKARHIVSQNKRRYQEGEFDLDMTYITENIIAMGFPAGDISSGLFGFFEGLYRNHMEEVIKFFETHHKDKYKVYNLCSERLYDASRFEGKVASFPFDDHNCPPIQLIPSFCQSAYTWLKEDIQNVVVVHCKAGMARTGLMICCLLLYLKFFPTAEEAIDYYNQKRCLDGKALVLPSQIRYVKYYERVQNQFDGKVPPERRCMLRGFRLINCPYWIRPAITISNHTDILFSTKKHQKTKDLGPEDFWIKAPKKGVVVFAIPGEAGLTELAGDFKIHFQDSDGDFYCWLNTTLTDNRTMLKGSDFDGFDKRKLPAPGFHVEIVMIEPDNSQPTKSKSDSTQQQSQSSSSADSSKLKSNEKDDDVFSDSDGEEEGNSQSYSTNEKTASSMHTTSKPHQINEPPKRDDPSANRSVTSSSSSGHYNPIPNNSLAVSDIKAIAADASVFSFGDEEEDYESD.

Positions 1-12 (METDPANSSSKS) are enriched in polar residues. A disordered region spans residues 1 to 98 (METDPANSSS…RESPPSIFSS (98 aa)). Positions 39–48 (SAEREAHEDS) are enriched in basic and acidic residues. Residues 63-73 (MPASSTGSEPL) show a composition bias toward polar residues. The segment covering 87-98 (SPRESPPSIFSS) has biased composition (low complexity). One can recognise a Phosphatase tensin-type domain in the interval 189-368 (RRYQEGEFDL…KYYERVQNQF (180 aa)). The active-site Phosphocysteine intermediate is C307. Residues 375 to 502 (ERRCMLRGFR…FHVEIVMIEP (128 aa)) form the C2 tensin-type domain. The tract at residues 504–603 (NSQPTKSKSD…SGHYNPIPNN (100 aa)) is disordered. Positions 505–527 (SQPTKSKSDSTQQQSQSSSSADS) are enriched in low complexity. The span at 535 to 549 (KDDDVFSDSDGEEEG) shows a compositional bias: acidic residues. S541 carries the post-translational modification Phosphoserine. Residues 550–571 (NSQSYSTNEKTASSMHTTSKPH) show a composition bias toward polar residues. The span at 584–594 (ANRSVTSSSSS) shows a compositional bias: low complexity.

It belongs to the PTEN phosphatase protein family. Expressed, at low levels, in seedlings, roots, stems, leaves, flowers and siliques. However, at protein level, not observed in older leaves, flowers and siliques.

The catalysed reaction is O-phospho-L-tyrosyl-[protein] + H2O = L-tyrosyl-[protein] + phosphate. The enzyme catalyses a 1,2-diacyl-sn-glycero-3-phospho-(1D-myo-inositol-3,4,5-trisphosphate) + H2O = a 1,2-diacyl-sn-glycero-3-phospho-(1D-myo-inositol-4,5-bisphosphate) + phosphate. Functionally, protein tyrosine phosphatase that also exhibits a weak lipid phosphatase activity towards PtdIns(3)P. The polypeptide is Phosphatidylinositol 3,4,5-trisphosphate 3-phosphatase and protein-tyrosine-phosphatase PTEN2B (Arabidopsis thaliana (Mouse-ear cress)).